Reading from the N-terminus, the 75-residue chain is uncharacterized protein (75 aa).

The helical transmembrane segment at 12–32 (LKVFILFTGFTALFYYAMIWV) threads the bilayer.

The protein resides in the cell membrane. This is an uncharacterized protein from Bacillus subtilis (strain 168).